The following is a 210-amino-acid chain: 2-dehydro-3-deoxy-phosphogluconate aldolase (210 aa).

Glu-41 functions as the Proton acceptor in the catalytic mechanism. Positions 45, 69, and 129 each coordinate pyruvate. Lys-129 functions as the Schiff-base intermediate with substrate in the catalytic mechanism.

Belongs to the KHG/KDPG aldolase family. In terms of assembly, homotrimer.

The protein localises to the cytoplasm. The catalysed reaction is 2-dehydro-3-deoxy-6-phospho-D-gluconate = D-glyceraldehyde 3-phosphate + pyruvate. The protein operates within carbohydrate acid metabolism; 2-dehydro-3-deoxy-D-gluconate degradation; D-glyceraldehyde 3-phosphate and pyruvate from 2-dehydro-3-deoxy-D-gluconate: step 2/2. In terms of biological role, catalyzes the reversible, stereospecific retro-aldol cleavage of 2-keto-3-deoxy-6-phosphogluconate (KDPG) to pyruvate and D-glyceraldehyde-3-phosphate. This is 2-dehydro-3-deoxy-phosphogluconate aldolase (eda) from Treponema pallidum (strain Nichols).